The primary structure comprises 307 residues: Retron Ec86 putative ribosyltransferase/DNA-binding protein (307 aa).

Functionally, possible ribosyltransferase/DNA-binding component of antiviral defense system retron Ec86, composed of a non-coding RNA (ncRNA), a ribosyltransferase/DNA-binding protein and a reverse transcriptase (RT). Expression of the 3-gene retron confers protection against bacteriophages T5. At multiplicity of infection (MOI) of 0.02 cultures grow normally when infected with T5 without collapsing, at MOI 2 cultures enter growth stasis. This chain is Retron Ec86 putative ribosyltransferase/DNA-binding protein, found in Escherichia coli.